We begin with the raw amino-acid sequence, 667 residues long: tRNA 5-methylaminomethyl-2-thiouridine biosynthesis bifunctional protein MnmC (667 aa).

The segment at 1 to 241 (MHKLTFAQLS…KREMLCGEKA (241 aa)) is tRNA (mnm(5)s(2)U34)-methyltransferase. An FAD-dependent cmnm(5)s(2)U34 oxidoreductase region spans residues 268 to 667 (VGGGIASLFV…RKWLKGSKVV (400 aa)).

The protein in the N-terminal section; belongs to the methyltransferase superfamily. tRNA (mnm(5)s(2)U34)-methyltransferase family. In the C-terminal section; belongs to the DAO family. Requires FAD as cofactor.

It localises to the cytoplasm. The enzyme catalyses 5-aminomethyl-2-thiouridine(34) in tRNA + S-adenosyl-L-methionine = 5-methylaminomethyl-2-thiouridine(34) in tRNA + S-adenosyl-L-homocysteine + H(+). Its function is as follows. Catalyzes the last two steps in the biosynthesis of 5-methylaminomethyl-2-thiouridine (mnm(5)s(2)U) at the wobble position (U34) in tRNA. Catalyzes the FAD-dependent demodification of cmnm(5)s(2)U34 to nm(5)s(2)U34, followed by the transfer of a methyl group from S-adenosyl-L-methionine to nm(5)s(2)U34, to form mnm(5)s(2)U34. This Haemophilus ducreyi (strain 35000HP / ATCC 700724) protein is tRNA 5-methylaminomethyl-2-thiouridine biosynthesis bifunctional protein MnmC.